Consider the following 300-residue polypeptide: Nucleotide-binding protein TM1040_2438 (300 aa).

24–31 (GPSGAGRT) is an ATP binding site. A GTP-binding site is contributed by 71–74 (DPRN).

This sequence belongs to the RapZ-like family.

In terms of biological role, displays ATPase and GTPase activities. The chain is Nucleotide-binding protein TM1040_2438 from Ruegeria sp. (strain TM1040) (Silicibacter sp.).